The following is a 226-amino-acid chain: V-type proton ATPase subunit E 1 (226 aa).

At Ala-2 the chain carries N-acetylalanine. Tyr-56 bears the Phosphotyrosine mark.

This sequence belongs to the V-ATPase E subunit family. V-ATPase is a heteromultimeric enzyme made up of two complexes: the ATP-hydrolytic V1 complex and the proton translocation V0 complex. The V1 complex consists of three catalytic AB heterodimers that form a heterohexamer, three peripheral stalks each consisting of EG heterodimers, one central rotor including subunits D and F, and the regulatory subunits C and H. The proton translocation complex V0 consists of the proton transport subunit a, a ring of proteolipid subunits c9c'', rotary subunit d, subunits e and f, and the accessory subunits ATP6AP1/Ac45 and ATP6AP2/PRR. Interacts with RABL2/RABL2A; binds preferentially to GTP-bound RABL2. Interacts with ALDOC. Interacts with RAB11B. Kidney; localizes to early distal nephron, encompassing thick ascending limbs and distal convoluted tubules (at protein level). Ubiquitous. High expression in the skin.

It localises to the apical cell membrane. The protein localises to the cytoplasmic vesicle. Its subcellular location is the secretory vesicle. It is found in the synaptic vesicle membrane. The protein resides in the clathrin-coated vesicle membrane. Functionally, subunit of the V1 complex of vacuolar(H+)-ATPase (V-ATPase), a multisubunit enzyme composed of a peripheral complex (V1) that hydrolyzes ATP and a membrane integral complex (V0) that translocates protons. V-ATPase is responsible for acidifying and maintaining the pH of intracellular compartments and in some cell types, is targeted to the plasma membrane, where it is responsible for acidifying the extracellular environment. The sequence is that of V-type proton ATPase subunit E 1 (ATP6V1E1) from Homo sapiens (Human).